The sequence spans 103 residues: Putative septation protein SpoVG (103 aa).

The protein belongs to the SpoVG family.

Its function is as follows. Could be involved in septation. The chain is Putative septation protein SpoVG from Exiguobacterium sibiricum (strain DSM 17290 / CCUG 55495 / CIP 109462 / JCM 13490 / 255-15).